We begin with the raw amino-acid sequence, 418 residues long: MKAEIIAVGTEILTGQIVNTNAQFLSEKLAEIGVDVYFQTAVGDNEVRLLSLLEIASQRSSLVILTGGLGPTEDDLTKQTLAKFLGKALVFDPQAQEKLDIFFALRPDYARTPNNERQAQIVEGAIPLPNETGLAVGGKLEVDGVTYVVLPGPPSELKPMVLNQLLPKLMTGNKLYSRVLRFFGIGESQLVTILADLIDNQIDPTLAPYAKTGEVTLRLSTKASSQEEANQALDILENQILDCQTFEGISLRDFCYGYGEETSLASIVVEELKRQGKTIAAAESLTAGLFQATVANFSGVSSIFEGGFVTYSLEEKSRMLDIPAKNLEEHGVVSEFTAQKMAEQARSKTQSDFGISLTGVAGPDSLEGHPVGTVFIGLAQDQGTEVIKVNIGGRSRADVRHIAVMHAFNLVRKALLSD.

This sequence belongs to the CinA family.

The sequence is that of Putative competence-damage inducible protein from Streptococcus pneumoniae serotype 19F (strain G54).